A 239-amino-acid polypeptide reads, in one-letter code: tRNA (guanine-N(1)-)-methyltransferase (239 aa).

Residues Gly110 and 130–135 (IGDYVL) each bind S-adenosyl-L-methionine.

This sequence belongs to the RNA methyltransferase TrmD family. Homodimer.

Its subcellular location is the cytoplasm. The enzyme catalyses guanosine(37) in tRNA + S-adenosyl-L-methionine = N(1)-methylguanosine(37) in tRNA + S-adenosyl-L-homocysteine + H(+). Specifically methylates guanosine-37 in various tRNAs. The protein is tRNA (guanine-N(1)-)-methyltransferase of Borrelia garinii subsp. bavariensis (strain ATCC BAA-2496 / DSM 23469 / PBi) (Borreliella bavariensis).